We begin with the raw amino-acid sequence, 208 residues long: Phosphoheptose isomerase (208 aa).

The SIS domain occupies 38 to 200; sequence MAVTLAKGHK…LFENVLALQP (163 aa). 53 to 55 contacts substrate; sequence NGG. The Zn(2+) site is built by His62 and Glu66. Substrate-binding positions include Glu66, 95 to 96, 121 to 123, Ser126, and Gln173; these read ND and STS. Positions 173 and 181 each coordinate Zn(2+).

It belongs to the SIS family. GmhA subfamily. In terms of assembly, homotetramer. Requires Zn(2+) as cofactor.

Its subcellular location is the cytoplasm. It carries out the reaction 2 D-sedoheptulose 7-phosphate = D-glycero-alpha-D-manno-heptose 7-phosphate + D-glycero-beta-D-manno-heptose 7-phosphate. The protein operates within carbohydrate biosynthesis; D-glycero-D-manno-heptose 7-phosphate biosynthesis; D-glycero-alpha-D-manno-heptose 7-phosphate and D-glycero-beta-D-manno-heptose 7-phosphate from sedoheptulose 7-phosphate: step 1/1. Its function is as follows. Catalyzes the isomerization of sedoheptulose 7-phosphate in D-glycero-D-manno-heptose 7-phosphate. This chain is Phosphoheptose isomerase, found in Nitratidesulfovibrio vulgaris (strain ATCC 29579 / DSM 644 / CCUG 34227 / NCIMB 8303 / VKM B-1760 / Hildenborough) (Desulfovibrio vulgaris).